The sequence spans 155 residues: MLSETKVIEIYTDGACSGNPGLGGWGAILRWNSHERELYGGKEYTTNNQMELMAAICALNALKESCSIDLYTDSVYVRNGISLWLENWKKNNWRTASKSPVKNMELWQALDGACARHNVRWHWVKGHAGHPDNERADALARKAITEYRQNGYFKG.

Positions 4 to 145 constitute an RNase H type-1 domain; sequence ETKVIEIYTD…ADALARKAIT (142 aa). Residues Asp13, Glu51, Asp73, and Asp137 each coordinate Mg(2+).

The protein belongs to the RNase H family. As to quaternary structure, monomer. The cofactor is Mg(2+).

It is found in the cytoplasm. It catalyses the reaction Endonucleolytic cleavage to 5'-phosphomonoester.. Endonuclease that specifically degrades the RNA of RNA-DNA hybrids. This is Ribonuclease H from Bartonella bacilliformis (strain ATCC 35685 / KC583 / Herrer 020/F12,63).